Reading from the N-terminus, the 450-residue chain is 3-phosphoshikimate 1-carboxyvinyltransferase (450 aa).

Lys-28, Ser-29, and Arg-33 together coordinate 3-phosphoshikimate. Phosphoenolpyruvate is bound at residue Lys-28. Positions 100 and 128 each coordinate phosphoenolpyruvate. Ser-173, Gln-175, Asp-326, and Lys-353 together coordinate 3-phosphoshikimate. Gln-175 lines the phosphoenolpyruvate pocket. Asp-326 serves as the catalytic Proton acceptor. Phosphoenolpyruvate contacts are provided by Arg-357 and Arg-402.

Belongs to the EPSP synthase family. Monomer.

The protein localises to the cytoplasm. The enzyme catalyses 3-phosphoshikimate + phosphoenolpyruvate = 5-O-(1-carboxyvinyl)-3-phosphoshikimate + phosphate. Its pathway is metabolic intermediate biosynthesis; chorismate biosynthesis; chorismate from D-erythrose 4-phosphate and phosphoenolpyruvate: step 6/7. In terms of biological role, catalyzes the transfer of the enolpyruvyl moiety of phosphoenolpyruvate (PEP) to the 5-hydroxyl of shikimate-3-phosphate (S3P) to produce enolpyruvyl shikimate-3-phosphate and inorganic phosphate. This Brucella melitensis biotype 1 (strain ATCC 23456 / CCUG 17765 / NCTC 10094 / 16M) protein is 3-phosphoshikimate 1-carboxyvinyltransferase.